Consider the following 391-residue polypeptide: NADH-quinone oxidoreductase subunit D (391 aa).

The protein belongs to the complex I 49 kDa subunit family. NDH-1 is composed of 14 different subunits. Subunits NuoB, C, D, E, F, and G constitute the peripheral sector of the complex.

Its subcellular location is the cell inner membrane. The enzyme catalyses a quinone + NADH + 5 H(+)(in) = a quinol + NAD(+) + 4 H(+)(out). NDH-1 shuttles electrons from NADH, via FMN and iron-sulfur (Fe-S) centers, to quinones in the respiratory chain. The immediate electron acceptor for the enzyme in this species is believed to be ubiquinone. Couples the redox reaction to proton translocation (for every two electrons transferred, four hydrogen ions are translocated across the cytoplasmic membrane), and thus conserves the redox energy in a proton gradient. The chain is NADH-quinone oxidoreductase subunit D from Rickettsia rickettsii (strain Sheila Smith).